Consider the following 235-residue polypeptide: Cell division protein FtsQ (235 aa).

Residues 1–6 (MERLTR) lie on the Cytoplasmic side of the membrane. The chain crosses the membrane as a helical span at residues 7-25 (WLLVMMAMLLAASGLVWFY). Over 26-235 (NSNHLPVKQV…DGLPEKESEE (210 aa)) the chain is Periplasmic. The POTRA domain maps to 30-99 (LPVKQVSLKG…DTVEVVLTER (70 aa)).

The protein belongs to the FtsQ/DivIB family. FtsQ subfamily. In terms of assembly, part of a complex composed of FtsB, FtsL and FtsQ.

It is found in the cell inner membrane. Its function is as follows. Essential cell division protein. May link together the upstream cell division proteins, which are predominantly cytoplasmic, with the downstream cell division proteins, which are predominantly periplasmic. May control correct divisome assembly. This Neisseria meningitidis serogroup B (strain ATCC BAA-335 / MC58) protein is Cell division protein FtsQ.